The primary structure comprises 426 residues: GTPase Obg (426 aa).

In terms of domain architecture, Obg spans 1 to 158; the sequence is MFVDQVSVYV…RNIKVELKLI (158 aa). 2 disordered regions span residues 66–86 and 119–146; these read GKRG…DPLV and GGRG…GEPG. Residues 159 to 329 form the OBG-type G domain; sequence ADVGLVGFPS…LLFAIADKLE (171 aa). GTP contacts are provided by residues 165 to 172, 190 to 194, 212 to 215, 282 to 285, and 310 to 312; these read GFPSVGKS, FTTLS, DLPG, NKMD, and SAL. Mg(2+) is bound by residues Ser-172 and Thr-192. In terms of domain architecture, OCT spans 348-426; that stretch reads RYQKEEDPFH…LLEYEFEFIE (79 aa).

The protein belongs to the TRAFAC class OBG-HflX-like GTPase superfamily. OBG GTPase family. As to quaternary structure, monomer. Requires Mg(2+) as cofactor.

It is found in the cytoplasm. Its function is as follows. An essential GTPase which binds GTP, GDP and possibly (p)ppGpp with moderate affinity, with high nucleotide exchange rates and a fairly low GTP hydrolysis rate. Plays a role in control of the cell cycle, stress response, ribosome biogenesis and in those bacteria that undergo differentiation, in morphogenesis control. The sequence is that of GTPase Obg from Oceanobacillus iheyensis (strain DSM 14371 / CIP 107618 / JCM 11309 / KCTC 3954 / HTE831).